The sequence spans 386 residues: Galactokinase (386 aa).

Substrate is bound at residue 35–38 (EHTD). Residues Ser-69 and 125 to 131 (GAGLSSS) each bind ATP. Mg(2+) is bound by residues Ser-131 and Glu-163. The Proton acceptor role is filled by Asp-175. Tyr-224 contributes to the substrate binding site.

The protein belongs to the GHMP kinase family. GalK subfamily.

It is found in the cytoplasm. It catalyses the reaction alpha-D-galactose + ATP = alpha-D-galactose 1-phosphate + ADP + H(+). The protein operates within carbohydrate metabolism; galactose metabolism. Its function is as follows. Catalyzes the transfer of the gamma-phosphate of ATP to D-galactose to form alpha-D-galactose-1-phosphate (Gal-1-P). The polypeptide is Galactokinase (Vibrio parahaemolyticus serotype O3:K6 (strain RIMD 2210633)).